Consider the following 74-residue polypeptide: ATP synthase subunit 9, mitochondrial (74 aa).

The next 2 membrane-spanning stretches (helical) occupy residues 8–28 (MGAG…GNVF) and 50–70 (ILGF…AFLI).

It belongs to the ATPase C chain family. In terms of assembly, F-type ATPases have 2 components, CF(1) - the catalytic core - and CF(0) - the membrane proton channel. CF(1) has five subunits: alpha(3), beta(3), gamma(1), delta(1), epsilon(1). CF(0) has three main subunits: a, b and c.

The protein resides in the mitochondrion membrane. Functionally, this protein is one of the chains of the nonenzymatic membrane component (F0) of mitochondrial ATPase. The protein is ATP synthase subunit 9, mitochondrial (ATP9) of Solanum tuberosum (Potato).